Here is a 426-residue protein sequence, read N- to C-terminus: D-tagatose-1,6-bisphosphate aldolase subunit KbaZ (426 aa).

This sequence belongs to the GatZ/KbaZ family. KbaZ subfamily. As to quaternary structure, forms a complex with KbaY.

It functions in the pathway carbohydrate metabolism; D-tagatose 6-phosphate degradation; D-glyceraldehyde 3-phosphate and glycerone phosphate from D-tagatose 6-phosphate: step 2/2. Functionally, component of the tagatose-1,6-bisphosphate aldolase KbaYZ that is required for full activity and stability of the Y subunit. Could have a chaperone-like function for the proper and stable folding of KbaY. When expressed alone, KbaZ does not show any aldolase activity. This is D-tagatose-1,6-bisphosphate aldolase subunit KbaZ from Escherichia coli (strain K12 / MC4100 / BW2952).